Here is a 122-residue protein sequence, read N- to C-terminus: Large ribosomal subunit protein uL14 (122 aa).

It belongs to the universal ribosomal protein uL14 family. Part of the 50S ribosomal subunit. Forms a cluster with proteins L3 and L19. In the 70S ribosome, L14 and L19 interact and together make contacts with the 16S rRNA in bridges B5 and B8.

In terms of biological role, binds to 23S rRNA. Forms part of two intersubunit bridges in the 70S ribosome. The polypeptide is Large ribosomal subunit protein uL14 (Borreliella burgdorferi (strain ATCC 35210 / DSM 4680 / CIP 102532 / B31) (Borrelia burgdorferi)).